Here is a 279-residue protein sequence, read N- to C-terminus: Urease accessory protein UreD (279 aa).

Belongs to the UreD family. In terms of assembly, ureD, UreF and UreG form a complex that acts as a GTP-hydrolysis-dependent molecular chaperone, activating the urease apoprotein by helping to assemble the nickel containing metallocenter of UreC. The UreE protein probably delivers the nickel.

It localises to the cytoplasm. Its function is as follows. Required for maturation of urease via the functional incorporation of the urease nickel metallocenter. This chain is Urease accessory protein UreD, found in Streptococcus thermophilus (strain CNRZ 1066).